Here is a 674-residue protein sequence, read N- to C-terminus: Methionine--tRNA ligase (674 aa).

A 'HIGH' region motif is present at residues Pro11–His21. Zn(2+)-binding residues include Cys142, Cys145, Cys155, and Cys158. A 'KMSKS' region motif is present at residues Lys330 to Ser334. Position 333 (Lys333) interacts with ATP. Positions Asp574–Lys674 constitute a tRNA-binding domain.

It belongs to the class-I aminoacyl-tRNA synthetase family. MetG type 1 subfamily. In terms of assembly, homodimer. It depends on Zn(2+) as a cofactor.

Its subcellular location is the cytoplasm. The catalysed reaction is tRNA(Met) + L-methionine + ATP = L-methionyl-tRNA(Met) + AMP + diphosphate. In terms of biological role, is required not only for elongation of protein synthesis but also for the initiation of all mRNA translation through initiator tRNA(fMet) aminoacylation. This chain is Methionine--tRNA ligase, found in Francisella tularensis subsp. tularensis (strain FSC 198).